The primary structure comprises 274 residues: Methylamine utilization protein MauF (274 aa).

The next 7 helical transmembrane spans lie at 30–50 (WTRALILAASAAGGGAAALAM), 52–72 (AAHVALVLGLAAFAGGLLSTW), 105–125 (LGYALGALILGTLLGAIGGIA), 127–147 (LSGFATSFGLGLLAVIGLAYG), 176–196 (WVVGGLYGLSLGLDYLTYVQT), 202–222 (VTAAAVLSGNVAEAVALIAIF), and 253–273 (AAIADGAILTAVGAAFAMLAL).

It is found in the cell membrane. Its pathway is one-carbon metabolism; methylamine degradation. This Paracoccus versutus (Thiobacillus versutus) protein is Methylamine utilization protein MauF (mauF).